The chain runs to 519 residues: Cytochrome P450 52E2 (519 aa).

2 helical membrane-spanning segments follow: residues 10-30 (MLGG…FYFI) and 44-64 (PIFF…NAWF). Heme is bound at residue Cys461.

It belongs to the cytochrome P450 family. Heme serves as cofactor.

Its subcellular location is the membrane. Its function is as follows. Together with an NADPH cytochrome P450 the enzyme system catalyzes the terminal hydroxylation as the first step in the assimilation of alkanes and fatty acids. The sequence is that of Cytochrome P450 52E2 (CYP52E2) from Candida apicola (Yeast).